The following is a 334-amino-acid chain: Glutamyl-tRNA reductase (334 aa).

Residues 49-52, Ser107, 112-114, and Gln118 each bind substrate; these read TCNR and EDQ. Residue Cys50 is the Nucleophile of the active site. Position 186 to 191 (186 to 191) interacts with NADP(+); it reads GNGEMG.

Belongs to the glutamyl-tRNA reductase family. As to quaternary structure, homodimer.

It catalyses the reaction (S)-4-amino-5-oxopentanoate + tRNA(Glu) + NADP(+) = L-glutamyl-tRNA(Glu) + NADPH + H(+). The protein operates within porphyrin-containing compound metabolism; protoporphyrin-IX biosynthesis; 5-aminolevulinate from L-glutamyl-tRNA(Glu): step 1/2. Its function is as follows. Catalyzes the NADPH-dependent reduction of glutamyl-tRNA(Glu) to glutamate 1-semialdehyde (GSA). In Alkaliphilus oremlandii (strain OhILAs) (Clostridium oremlandii (strain OhILAs)), this protein is Glutamyl-tRNA reductase.